The sequence spans 190 residues: Peptidoglycan recognition protein 1 (190 aa).

An N-terminal signal peptide occupies residues 1-21 (MSRRYTPLAWVLLALLGLGAA). Glutamine 22 carries the post-translational modification Pyrrolidone carboxylic acid. Disulfide bonds link cysteine 24–cysteine 148, cysteine 40–cysteine 85, and cysteine 61–cysteine 67. The N-acetylmuramoyl-L-alanine amidase domain maps to 46–174 (QPVRYVVVSH…RDVQQTLSPG (129 aa)).

It belongs to the N-acetylmuramoyl-L-alanine amidase 2 family. Homodimer; disulfide-linked.

It is found in the secreted. The protein resides in the cytoplasmic granule. Functionally, innate immunity protein that plays several important functions in antimicrobial and antitumor defense systems. Acts as a pattern receptor that binds to murein peptidoglycans (PGN) of Gram-positive bacteria and thus provides bactericidal activity. Forms an equimolar complex with heat shock protein HSPA1A and induces programmed cell death through apoptosis and necroptosis in tumor cell lines by activating the TNFR1 receptor on the target cell membrane. In addition, acts in complex with the Ca(2+)-binding protein S100A4 as a chemoattractant able to induce lymphocyte movement. Mechanistically, this complex acts as a ligand of the chemotactic receptors CCR5 and CXCR3 which are present on the cells of the immune system. Promotes also the activation of lymphocytes that become able to kill virus-infected cells as well as tumor cells by modulating the spectrum of their target-cell specificity. Induction of cytotoxicity on monocyte surface requires interaction with TREM1 receptor. The protein is Peptidoglycan recognition protein 1 (PGLYRP1) of Bos indicus (Zebu).